Consider the following 601-residue polypeptide: Elongation factor 4 (601 aa).

The region spanning 6–188 (SHIRNFSIIA…QIVHRVPAPE (183 aa)) is the tr-type G domain. GTP contacts are provided by residues 18 to 23 (DHGKST) and 135 to 138 (NKID).

Belongs to the TRAFAC class translation factor GTPase superfamily. Classic translation factor GTPase family. LepA subfamily.

It is found in the cell inner membrane. It catalyses the reaction GTP + H2O = GDP + phosphate + H(+). In terms of biological role, required for accurate and efficient protein synthesis under certain stress conditions. May act as a fidelity factor of the translation reaction, by catalyzing a one-codon backward translocation of tRNAs on improperly translocated ribosomes. Back-translocation proceeds from a post-translocation (POST) complex to a pre-translocation (PRE) complex, thus giving elongation factor G a second chance to translocate the tRNAs correctly. Binds to ribosomes in a GTP-dependent manner. The polypeptide is Elongation factor 4 (Anaeromyxobacter dehalogenans (strain 2CP-1 / ATCC BAA-258)).